The following is a 421-amino-acid chain: UDP-N-acetylglucosamine 1-carboxyvinyltransferase (421 aa).

A phosphoenolpyruvate-binding site is contributed by K22–N23. R93 is a binding site for UDP-N-acetyl-alpha-D-glucosamine. Catalysis depends on C117, which acts as the Proton donor. The residue at position 117 (C117) is a 2-(S-cysteinyl)pyruvic acid O-phosphothioketal. UDP-N-acetyl-alpha-D-glucosamine-binding positions include R122–L126, D308, and I330.

It belongs to the EPSP synthase family. MurA subfamily.

Its subcellular location is the cytoplasm. It catalyses the reaction phosphoenolpyruvate + UDP-N-acetyl-alpha-D-glucosamine = UDP-N-acetyl-3-O-(1-carboxyvinyl)-alpha-D-glucosamine + phosphate. Its pathway is cell wall biogenesis; peptidoglycan biosynthesis. In terms of biological role, cell wall formation. Adds enolpyruvyl to UDP-N-acetylglucosamine. The sequence is that of UDP-N-acetylglucosamine 1-carboxyvinyltransferase from Pseudomonas syringae pv. tomato (strain ATCC BAA-871 / DC3000).